A 284-amino-acid chain; its full sequence is 2-dehydro-3-deoxyphosphooctonate aldolase (284 aa).

The protein belongs to the KdsA family.

It localises to the cytoplasm. The catalysed reaction is D-arabinose 5-phosphate + phosphoenolpyruvate + H2O = 3-deoxy-alpha-D-manno-2-octulosonate-8-phosphate + phosphate. The protein operates within carbohydrate biosynthesis; 3-deoxy-D-manno-octulosonate biosynthesis; 3-deoxy-D-manno-octulosonate from D-ribulose 5-phosphate: step 2/3. It functions in the pathway bacterial outer membrane biogenesis; lipopolysaccharide biosynthesis. The sequence is that of 2-dehydro-3-deoxyphosphooctonate aldolase from Pseudoalteromonas translucida (strain TAC 125).